The sequence spans 303 residues: N-acetyl-D-glucosamine kinase (303 aa).

Residues G4–K11 and G133–L140 contribute to the ATP site. Zn(2+)-binding residues include H157, C177, C179, and C184.

Belongs to the ROK (NagC/XylR) family. NagK subfamily.

It carries out the reaction N-acetyl-D-glucosamine + ATP = N-acetyl-D-glucosamine 6-phosphate + ADP + H(+). It functions in the pathway cell wall biogenesis; peptidoglycan recycling. In terms of biological role, catalyzes the phosphorylation of N-acetyl-D-glucosamine (GlcNAc) derived from cell-wall degradation, yielding GlcNAc-6-P. The polypeptide is N-acetyl-D-glucosamine kinase (Salmonella newport (strain SL254)).